The sequence spans 262 residues: DNA-directed RNA polymerase subunit Rpo3 (262 aa).

It belongs to the archaeal Rpo3/eukaryotic RPB3 RNA polymerase subunit family. Part of the RNA polymerase complex.

The protein resides in the cytoplasm. The catalysed reaction is RNA(n) + a ribonucleoside 5'-triphosphate = RNA(n+1) + diphosphate. In terms of biological role, DNA-dependent RNA polymerase (RNAP) catalyzes the transcription of DNA into RNA using the four ribonucleoside triphosphates as substrates. This is DNA-directed RNA polymerase subunit Rpo3 from Pyrobaculum neutrophilum (strain DSM 2338 / JCM 9278 / NBRC 100436 / V24Sta) (Thermoproteus neutrophilus).